The sequence spans 431 residues: Adenylosuccinate lyase (431 aa).

Residues 4–5 (RY), 67–69 (RHD), and 93–94 (TS) each bind N(6)-(1,2-dicarboxyethyl)-AMP. The active-site Proton donor/acceptor is His-141. N(6)-(1,2-dicarboxyethyl)-AMP is bound at residue Gln-212. Catalysis depends on Ser-262, which acts as the Proton donor/acceptor. N(6)-(1,2-dicarboxyethyl)-AMP is bound by residues Ser-263, 268–270 (KRN), Asn-276, and 307–311 (SAERI).

Belongs to the lyase 1 family. Adenylosuccinate lyase subfamily. In terms of assembly, homodimer and homotetramer. Residues from neighboring subunits contribute catalytic and substrate-binding residues to each active site.

It carries out the reaction N(6)-(1,2-dicarboxyethyl)-AMP = fumarate + AMP. The catalysed reaction is (2S)-2-[5-amino-1-(5-phospho-beta-D-ribosyl)imidazole-4-carboxamido]succinate = 5-amino-1-(5-phospho-beta-D-ribosyl)imidazole-4-carboxamide + fumarate. Its pathway is purine metabolism; AMP biosynthesis via de novo pathway; AMP from IMP: step 2/2. It functions in the pathway purine metabolism; IMP biosynthesis via de novo pathway; 5-amino-1-(5-phospho-D-ribosyl)imidazole-4-carboxamide from 5-amino-1-(5-phospho-D-ribosyl)imidazole-4-carboxylate: step 2/2. In terms of biological role, catalyzes two reactions in de novo purine nucleotide biosynthesis. Catalyzes the breakdown of 5-aminoimidazole- (N-succinylocarboxamide) ribotide (SAICAR or 2-[5-amino-1-(5-phospho-beta-D-ribosyl)imidazole-4-carboxamido]succinate) to 5-aminoimidazole-4-carboxamide ribotide (AICAR or 5-amino-1-(5-phospho-beta-D-ribosyl)imidazole-4-carboxamide) and fumarate, and of adenylosuccinate (ADS or N(6)-(1,2-dicarboxyethyl)-AMP) to adenosine monophosphate (AMP) and fumarate. The chain is Adenylosuccinate lyase (purB) from Staphylococcus saprophyticus subsp. saprophyticus (strain ATCC 15305 / DSM 20229 / NCIMB 8711 / NCTC 7292 / S-41).